The chain runs to 96 residues: Secreted RxLR effector protein 123 (96 aa).

Positions 1-22 (MVGAYYVGIALLVAGGSQTAAG) are cleaved as a signal peptide. The RxLR-dEER signature appears at 49–70 (RFLRKSRNPKDNLMLSEANEER). Positions 57-96 (PKDNLMLSEANEERTPSSPSNSLTEFIVSEPITTNVMRTE) are disordered. The segment covering 87-96 (PITTNVMRTE) has biased composition (polar residues).

The protein belongs to the RxLR effector family.

It localises to the secreted. It is found in the host nucleus. Its subcellular location is the host cytoplasm. Secreted effector that dos not suppress the host cell death induced by cell death-inducing proteins. The sequence is that of Secreted RxLR effector protein 123 from Plasmopara viticola (Downy mildew of grapevine).